The sequence spans 171 residues: PRA1-like protein (171 aa).

The next 3 helical transmembrane spans lie at 67–87 (AIIA…LIVI), 119–139 (VILA…ETII), and 140–160 (WLVG…EPPV).

Belongs to the PRA1 family.

The protein localises to the membrane. The protein is PRA1-like protein of Schizosaccharomyces pombe (strain 972 / ATCC 24843) (Fission yeast).